A 464-amino-acid polypeptide reads, in one-letter code: MASESGKLWGGRFVGAVDPIMEKFNSSISYDRHLWNVDVQGSKAYSRGLEKAGLLTKAEMQQILQGLDKVAEEWAQGTFKLHPNDEDIHTANERRLKELIGEAAGKLHTGRSRNDQVVTDLRLWMRQTCSKLSALLRVLIGTMVDRAEAERDVLFPGYTHLQRAQPIRWSHWILSHAVALTRDSERLLEVQKRINVLPLGSGAIAGNPLGVDRELLRAELNFGAITLNSMDATSERDFVAEFLFWASLCMTHLSRMAEDLILYGTKEFSFVQLSDAYSTGSSLMPQKKNPDSLELIRSKAGRVFGRCAGLLMTLKGLPSTYNKDLQEDKEAVFEVSDTMIAVLQVATGVISTLQIHRENMKQALSPDMLATDLAYYLVRKGMPFRQAHEASGKAVFMAETKGVALNLLSLQELQTISPLFSGDVSHVWDYSHSVEQYSALGGTAKSSVEWQIRQVRALLQAQEP.

The residue at position 2 (A2) is an N-acetylalanine. K7 is modified (N6-acetyllysine). S27 contributes to the 2-(N(omega)-L-arginino)succinate binding site. N6-acetyllysine is present on K69. Residues N114 and T159 each coordinate 2-(N(omega)-L-arginino)succinate. Catalysis depends on H160, which acts as the Proton acceptor. S281 acts as the Proton donor in catalysis. The residue at position 288 (K288) is an N6-acetyllysine. 4 residues coordinate 2-(N(omega)-L-arginino)succinate: N289, Y321, Q326, and K329.

It belongs to the lyase 1 family. Argininosuccinate lyase subfamily. Homotetramer. Forms tissue-specific complexes with ASS1, SLC7A1, HSP90AA1 and nitric oxide synthase NOS1, NOS2 or NOS3; the complex maintenance is independent of ASL catalytic function. In terms of processing, acetylation modifies enzyme activity in response to alterations of extracellular nutrient availability. Acetylation increased with trichostin A (TSA) or with nicotinamide (NAM). Glucose increases acetylation by about a factor of 3 with decreasing enzyme activity. Acetylation on Lys-288 is decreased on the addition of extra amino acids resulting in activation of enzyme activity. In terms of tissue distribution, expressed in lung and brain (at protein level).

The enzyme catalyses 2-(N(omega)-L-arginino)succinate = fumarate + L-arginine. The protein operates within amino-acid biosynthesis; L-arginine biosynthesis; L-arginine from L-ornithine and carbamoyl phosphate: step 3/3. It participates in nitrogen metabolism; urea cycle; L-arginine and fumarate from (N(omega)-L-arginino)succinate: step 1/1. Enzyme activity is regulated by acetylation. In terms of biological role, catalyzes the reversible cleavage of L-argininosuccinate to fumarate and L-arginine, an intermediate step reaction in the urea cycle mostly providing for hepatic nitrogen detoxification into excretable urea as well as de novo L-arginine synthesis in nonhepatic tissues. Essential regulator of intracellular and extracellular L-arginine pools. As part of citrulline-nitric oxide cycle, forms tissue-specific multiprotein complexes with argininosuccinate synthase ASS1, transport protein SLC7A1 and nitric oxide synthase NOS1, NOS2 or NOS3, allowing for cell-autonomous L-arginine synthesis while channeling extracellular L-arginine to nitric oxide synthesis pathway. The protein is Argininosuccinate lyase (Asl) of Mus musculus (Mouse).